The following is a 438-amino-acid chain: L-fucose-proton symporter (438 aa).

Residues 2–26 (GNTSIQTQSYRAVDKDAGQSRSYII) lie on the Cytoplasmic side of the membrane. Residues 27 to 53 (PFALLCSLFFLWAVANNLNDILLPQFQ) traverse the membrane as a helical segment. At 54–61 (QAFTLTNF) the chain is on the periplasmic side. Residues 62 to 87 (QAGLIQSAFYFGYFIIPIPAGILMKK) traverse the membrane as a helical segment. Over 88–90 (LSY) the chain is Cytoplasmic. Residues 91 to 113 (KAGIITGLFLYALGAALFWPAAE) form a helical membrane-spanning segment. The Periplasmic portion of the chain corresponds to 114–117 (IMNY). The helical transmembrane segment at 118 to 144 (TLFLVGLFIIAAGLGCLETAANPFVTV) threads the bilayer. The Cytoplasmic portion of the chain corresponds to 145-150 (LGPESS). The helical transmembrane segment at 151-178 (GHFRLNLAQTFNSFGAIIAVVFGQSLIL) threads the bilayer. Topologically, residues 179 to 193 (SNVPHQSQDVLDKMS) are periplasmic. The chain crosses the membrane as a helical span at residues 194-227 (PEQLSAYKHSLVLSVQTPYMIIVAIVLLVALLIM). At 228-257 (LTKFPALQSDNHSDAKQGSFSASLSRLARI) the chain is on the cytoplasmic side. Residues 258 to 287 (RHWRWAVLAQFCYVGAQTACWSYLIRYAVE) form a helical membrane-spanning segment. The Periplasmic portion of the chain corresponds to 288–293 (EIPGMT). A helical transmembrane segment spans residues 294–319 (AGFAANYLTGTMVCFFIGRFTGTWLI). At 320-324 (SRFAP) the chain is on the cytoplasmic side. The chain crosses the membrane as a helical span at residues 325-343 (HKVLAAYALIAMALCLISA). Topologically, residues 344–347 (FAGG) are periplasmic. Residues 348 to 372 (HVGLIALTLCSAFMSIQYPTIFSLG) form a helical membrane-spanning segment. Residues 373 to 379 (IKNLGQD) lie on the Cytoplasmic side of the membrane. The helical transmembrane segment at 380–407 (TKYGSSFIVMTIIGGGIVTPVMGFVSDA) threads the bilayer. Over 408–410 (AGN) the chain is Periplasmic. Residues 411–430 (IPTAELIPALCFAVIFIFAR) traverse the membrane as a helical segment. The Cytoplasmic portion of the chain corresponds to 431–438 (FRSQTATN).

It belongs to the major facilitator superfamily. FHS transporter (TC 2.A.1.7) family.

It localises to the cell inner membrane. It carries out the reaction L-fucose(in) + H(+)(in) = L-fucose(out) + H(+)(out). The enzyme catalyses D-arabinose(out) + H(+)(out) = D-arabinose(in) + H(+)(in). The catalysed reaction is L-galactose(out) + H(+)(out) = L-galactose(in) + H(+)(in). Functionally, mediates the uptake of L-fucose across the boundary membrane with the concomitant transport of protons into the cell (symport system). Can also transport L-galactose and D-arabinose, but at reduced rates compared with L-fucose. Is not able to transport L-rhamnose and L-arabinose. Binds D-arabinose with the highest affinity, followed by L-fucose, and then by L-galactose. This is L-fucose-proton symporter (fucP) from Escherichia coli (strain K12).